A 115-amino-acid polypeptide reads, in one-letter code: Nucleoid-associated protein LBL_0065 (115 aa).

Belongs to the YbaB/EbfC family. Homodimer.

Its subcellular location is the cytoplasm. The protein resides in the nucleoid. In terms of biological role, binds to DNA and alters its conformation. May be involved in regulation of gene expression, nucleoid organization and DNA protection. In Leptospira borgpetersenii serovar Hardjo-bovis (strain L550), this protein is Nucleoid-associated protein LBL_0065.